The sequence spans 218 residues: Peptidyl-tRNA hydrolase (218 aa).

Tyr19 is a binding site for tRNA. Catalysis depends on His24, which acts as the Proton acceptor. TRNA contacts are provided by Tyr68, Asn70, and Asn116. Positions 181–218 (WNTATQRLNARPAPPKPPKAPKAPQPAAADQPKDESQP) are disordered. Pro residues predominate over residues 192–204 (PAPPKPPKAPKAP).

It belongs to the PTH family. Monomer.

Its subcellular location is the cytoplasm. It carries out the reaction an N-acyl-L-alpha-aminoacyl-tRNA + H2O = an N-acyl-L-amino acid + a tRNA + H(+). Functionally, hydrolyzes ribosome-free peptidyl-tRNAs (with 1 or more amino acids incorporated), which drop off the ribosome during protein synthesis, or as a result of ribosome stalling. Its function is as follows. Catalyzes the release of premature peptidyl moieties from peptidyl-tRNA molecules trapped in stalled 50S ribosomal subunits, and thus maintains levels of free tRNAs and 50S ribosomes. The chain is Peptidyl-tRNA hydrolase from Azoarcus sp. (strain BH72).